A 153-amino-acid polypeptide reads, in one-letter code: MPLLLSGRVFRRDLDACGCLAMHVPLEGGSETRLLRRLRAAGYRTQLSSARGLGDPEVFLFQLHGIRPPHLGHQSVGRNGAVGEVQQVMPQLAELFVDNVPVVLWLLEGQVLSRSELLALCDLCKRESRLRVVVEMGGARSLNWQPMSTLLGV.

It belongs to the complex I NdhN subunit family. As to quaternary structure, NDH-1 can be composed of about 15 different subunits; different subcomplexes with different compositions have been identified which probably have different functions.

It localises to the cellular thylakoid membrane. The enzyme catalyses a plastoquinone + NADH + (n+1) H(+)(in) = a plastoquinol + NAD(+) + n H(+)(out). It catalyses the reaction a plastoquinone + NADPH + (n+1) H(+)(in) = a plastoquinol + NADP(+) + n H(+)(out). Functionally, NDH-1 shuttles electrons from an unknown electron donor, via FMN and iron-sulfur (Fe-S) centers, to quinones in the respiratory and/or the photosynthetic chain. The immediate electron acceptor for the enzyme in this species is believed to be plastoquinone. Couples the redox reaction to proton translocation, and thus conserves the redox energy in a proton gradient. Cyanobacterial NDH-1 also plays a role in inorganic carbon-concentration. This chain is NAD(P)H-quinone oxidoreductase subunit N, found in Prochlorococcus marinus (strain MIT 9303).